A 303-amino-acid chain; its full sequence is Probable cell division protein WhiA (303 aa).

The H-T-H motif DNA-binding region spans 272–303; the sequence is SIQQLADSLSKPLTKSGVNHRLRKINKIADEL.

This sequence belongs to the WhiA family.

Involved in cell division and chromosome segregation. This is Probable cell division protein WhiA from Streptococcus gordonii (strain Challis / ATCC 35105 / BCRC 15272 / CH1 / DL1 / V288).